The following is a 775-amino-acid chain: MQDLNAVQSLAVWAVLVISLLGIGYAFFIRSQILAQDTGTPKMREVWGFIKTGANAYLSQQFRTISILIVILTFVLAASVFIIPPTTEAVERFGSKEAATIWVAIGRAVAFLMGSLFSYAVGFVGMNVAVEGNVRVAAAARKGYNPALQVAYKSGSVTGMLTVGLGLLGGTLIFMVFGIAAPDALLGFGFGGSLIALFMRVGGGIYTKAADVGADLVGKVEAGIPEDDPRNAAVIADLVGDNVGDCAGMAADVFESFEVTLVSALILGLVLGDAVVGTIGDGAYDLRFIIFPLVLRAIGVVASVIGNLFVTTDERKRNAMAAMNRGFYIAAGLAIAASAAATPVFMVNEATGEVDWRPFFATLSGVVLAIVLDKLTEYFTSTHFSPVKETSKASQTGSATNILSGLALGMESSVWAILVISASIFTSVLIYAGEPAATQFTAILYGVSLTGIGMLLLTGNTISMDSFGPISDNANGIGEMAGLDKNARNVMDDLDAVGNTTKAVTKGIAIGSAVIAAVALYGSYFTDVNKVLQQMINEGRQGIELLASINVAAPPVFIGLLIGGAVPFLFSALTIRAVSRAAAQIVNEVRRQFRIPGLMEGKVQPDYARAVQISTTAAQKELISLGLIAVMVPIIVGFTLGVEALGGFLAGIILTGQLMAVFQANAGGAWDNAKKYIEEGNFGGKHSEPHKAAVVGDTVGDPLKDTAGPALNPMIKVINLVALIIAPIVVTIEPGSPGVIIAMIICGAALVWAIWQSKRESEALKEIAQAPASAD.

5 helical membrane passes run 9 to 29, 65 to 85, 108 to 128, 160 to 180, and 185 to 205; these read SLAVWAVLVISLLGIGYAFFI, ISILIVILTFVLAASVFIIPP, AVAFLMGSLFSYAVGFVGMNV, MLTVGLGLLGGTLIFMVFGIA, and LLGFGFGGSLIALFMRVGGGI. Lys-208 is a binding site for substrate. Mg(2+) contacts are provided by Asp-211, Asp-215, and Asp-241. Transmembrane regions (helical) follow at residues 259 to 279, 288 to 308, 327 to 347, 359 to 379, 413 to 433, and 442 to 462; these read VTLVSALILGLVLGDAVVGTI, FIIFPLVLRAIGVVASVIGNL, FYIAAGLAIAASAAATPVFMV, FFATLSGVVLAIVLDKLTEYF, SVWAILVISASIFTSVLIYAG, and AILYGVSLTGIGMLLLTGNTI. Asp-472 provides a ligand contact to Mg(2+). The next 4 membrane-spanning stretches (helical) occupy residues 508–528, 555–575, 622–642, and 644–664; these read IAIGSAVIAAVALYGSYFTDV, PVFIGLLIGGAVPFLFSALTI, LISLGLIAVMVPIIVGFTLGV, and ALGGFLAGIILTGQLMAVFQA. Ca(2+) is bound by residues Asp-671, Asp-697, and Asp-701. Residue Lys-704 participates in substrate binding. The next 2 helical transmembrane spans lie at 710-730 and 735-755; these read ALNPMIKVINLVALIIAPIVV and GSPGVIIAMIICGAALVWAIW.

This sequence belongs to the H(+)-translocating pyrophosphatase (TC 3.A.10) family. K(+)-insensitive subfamily. In terms of assembly, homodimer. Requires Mg(2+) as cofactor.

The protein localises to the cell membrane. It catalyses the reaction diphosphate + H2O + H(+)(in) = 2 phosphate + 2 H(+)(out). Functionally, proton pump that utilizes the energy of pyrophosphate hydrolysis as the driving force for proton movement across the membrane. Generates a proton motive force. The polypeptide is K(+)-insensitive pyrophosphate-energized proton pump (Chloroflexus aurantiacus (strain ATCC 29366 / DSM 635 / J-10-fl)).